Consider the following 301-residue polypeptide: 33 kDa chaperonin (301 aa).

2 disulfide bridges follow: C239–C241 and C272–C275.

This sequence belongs to the HSP33 family. In terms of processing, under oxidizing conditions two disulfide bonds are formed involving the reactive cysteines. Under reducing conditions zinc is bound to the reactive cysteines and the protein is inactive.

Its subcellular location is the cytoplasm. In terms of biological role, redox regulated molecular chaperone. Protects both thermally unfolding and oxidatively damaged proteins from irreversible aggregation. Plays an important role in the bacterial defense system toward oxidative stress. In Nostoc sp. (strain PCC 7120 / SAG 25.82 / UTEX 2576), this protein is 33 kDa chaperonin.